A 188-amino-acid polypeptide reads, in one-letter code: Elongation factor P (188 aa).

The protein belongs to the elongation factor P family.

The protein resides in the cytoplasm. It functions in the pathway protein biosynthesis; polypeptide chain elongation. In terms of biological role, involved in peptide bond synthesis. Stimulates efficient translation and peptide-bond synthesis on native or reconstituted 70S ribosomes in vitro. Probably functions indirectly by altering the affinity of the ribosome for aminoacyl-tRNA, thus increasing their reactivity as acceptors for peptidyl transferase. The chain is Elongation factor P from Rickettsia massiliae (strain Mtu5).